Consider the following 116-residue polypeptide: NADH-ubiquinone oxidoreductase chain 3 (116 aa).

A run of 3 helical transmembrane segments spans residues 3–23 (LITT…TISF), 56–76 (FFLI…LLPL), and 87–107 (LTLI…IYEW).

Belongs to the complex I subunit 3 family.

It localises to the mitochondrion membrane. It catalyses the reaction a ubiquinone + NADH + 5 H(+)(in) = a ubiquinol + NAD(+) + 4 H(+)(out). Functionally, core subunit of the mitochondrial membrane respiratory chain NADH dehydrogenase (Complex I) that is believed to belong to the minimal assembly required for catalysis. Complex I functions in the transfer of electrons from NADH to the respiratory chain. The immediate electron acceptor for the enzyme is believed to be ubiquinone. The polypeptide is NADH-ubiquinone oxidoreductase chain 3 (MT-ND3) (Oncorhynchus mykiss (Rainbow trout)).